The sequence spans 435 residues: MGFLWRTRSNEKKITPVLSWPESEPESEITIPPEFQCPISIDLMKDPVIISTGITYDRVSIETWINSGNKTCPVTNTVLTTFDQIPNHTIRKMIQGWCVEKGSPLIQRIPTPRVPLMPCEVYEISRKLSSATRRGDYEKCGVIIEKIKKLGDESEKNRKCVNENSVGWVLCDCFDKFSGDEKLTFMLNEILSLLTWMFPIGLEGISKLASATSFRCVAGLLKSTDDSVRQNAAFIMKEILSLDETRVHSFAVENGVAEALVKLIRDSVSSSSTKSSLIAIYQMVLQKPEIASEFLEIGLVSITVEMIVDAENSVCEKALAVLDAICETEHGREEVRKNALVMPLLVKKIAKVSELATRSSMSMILKLWKTGNTVAVEDAVRLGAFQKVLLVLQVGYGEETKEKATELLKMMNTQMKLMSDCVDSLKEFKYIKKPF.

A U-box domain is found at 30–104 (TIPPEFQCPI…QGWCVEKGSP (75 aa)). 4 ARM repeats span residues 202 to 241 (LEGI…EILS), 245 to 285 (TRVH…QMVL), 288 to 327 (PEIA…AICE), and 329 to 369 (EHGR…KLWK).

The enzyme catalyses S-ubiquitinyl-[E2 ubiquitin-conjugating enzyme]-L-cysteine + [acceptor protein]-L-lysine = [E2 ubiquitin-conjugating enzyme]-L-cysteine + N(6)-ubiquitinyl-[acceptor protein]-L-lysine.. Its pathway is protein modification; protein ubiquitination. Its function is as follows. Functions as an E3 ubiquitin ligase. This Arabidopsis thaliana (Mouse-ear cress) protein is U-box domain-containing protein 21 (PUB21).